The primary structure comprises 242 residues: Biosynthetic peptidoglycan transglycosylase (242 aa).

A helical membrane pass occupies residues 18 to 38 (VIMAVLCIAILYQLWMFSLVV).

It belongs to the glycosyltransferase 51 family.

The protein localises to the cell inner membrane. It carries out the reaction [GlcNAc-(1-&gt;4)-Mur2Ac(oyl-L-Ala-gamma-D-Glu-L-Lys-D-Ala-D-Ala)](n)-di-trans,octa-cis-undecaprenyl diphosphate + beta-D-GlcNAc-(1-&gt;4)-Mur2Ac(oyl-L-Ala-gamma-D-Glu-L-Lys-D-Ala-D-Ala)-di-trans,octa-cis-undecaprenyl diphosphate = [GlcNAc-(1-&gt;4)-Mur2Ac(oyl-L-Ala-gamma-D-Glu-L-Lys-D-Ala-D-Ala)](n+1)-di-trans,octa-cis-undecaprenyl diphosphate + di-trans,octa-cis-undecaprenyl diphosphate + H(+). It participates in cell wall biogenesis; peptidoglycan biosynthesis. Functionally, peptidoglycan polymerase that catalyzes glycan chain elongation from lipid-linked precursors. The chain is Biosynthetic peptidoglycan transglycosylase from Bordetella bronchiseptica (strain ATCC BAA-588 / NCTC 13252 / RB50) (Alcaligenes bronchisepticus).